The chain runs to 358 residues: Peptide chain release factor 1 (358 aa).

Residue Gln236 is modified to N5-methylglutamine.

It belongs to the prokaryotic/mitochondrial release factor family. In terms of processing, methylated by PrmC. Methylation increases the termination efficiency of RF1.

Its subcellular location is the cytoplasm. Peptide chain release factor 1 directs the termination of translation in response to the peptide chain termination codons UAG and UAA. This is Peptide chain release factor 1 from Corynebacterium aurimucosum (strain ATCC 700975 / DSM 44827 / CIP 107346 / CN-1) (Corynebacterium nigricans).